The primary structure comprises 594 residues: Membrane protein insertase YidC (594 aa).

Residues tyrosine 7–serine 27 form a helical membrane-spanning segment. Positions alanine 36–arginine 73 are disordered. Low complexity predominate over residues alanine 37–alanine 65. The next 4 helical transmembrane spans lie at leucine 369–phenylalanine 389, tryptophan 443–isoleucine 463, leucine 488–isoleucine 508, and phenylalanine 532–isoleucine 552.

The protein belongs to the OXA1/ALB3/YidC family. Type 1 subfamily. Interacts with the Sec translocase complex via SecD. Specifically interacts with transmembrane segments of nascent integral membrane proteins during membrane integration.

It is found in the cell inner membrane. Functionally, required for the insertion and/or proper folding and/or complex formation of integral membrane proteins into the membrane. Involved in integration of membrane proteins that insert both dependently and independently of the Sec translocase complex, as well as at least some lipoproteins. Aids folding of multispanning membrane proteins. The chain is Membrane protein insertase YidC from Rhizobium meliloti (strain 1021) (Ensifer meliloti).